Here is a 262-residue protein sequence, read N- to C-terminus: Catechol O-methyltransferase domain-containing protein 1 (262 aa).

A helical; Signal-anchor for type II membrane protein membrane pass occupies residues 12 to 32 (AALALGSAALGAAFATGLFLG). S-adenosyl-L-methionine-binding positions include aspartate 108, 110–111 (GT), serine 116, glutamate 134, valine 135, alanine 163, aspartate 185, aspartate 187, and tyrosine 194.

The protein belongs to the class I-like SAM-binding methyltransferase superfamily. Cation-dependent O-methyltransferase family. In terms of assembly, homodimer.

The protein resides in the membrane. Putative O-methyltransferase. The chain is Catechol O-methyltransferase domain-containing protein 1 (COMTD1) from Homo sapiens (Human).